A 309-amino-acid polypeptide reads, in one-letter code: Tagatose-6-phosphate kinase (309 aa).

The protein belongs to the carbohydrate kinase PfkB family. LacC subfamily.

The catalysed reaction is D-tagatofuranose 6-phosphate + ATP = D-tagatofuranose 1,6-bisphosphate + ADP + H(+). It participates in carbohydrate metabolism; D-tagatose 6-phosphate degradation; D-glyceraldehyde 3-phosphate and glycerone phosphate from D-tagatose 6-phosphate: step 1/2. This Streptococcus pyogenes serotype M3 (strain SSI-1) protein is Tagatose-6-phosphate kinase.